A 219-amino-acid chain; its full sequence is N-(5'-phosphoribosyl)anthranilate isomerase (219 aa).

This sequence belongs to the TrpF family.

It carries out the reaction N-(5-phospho-beta-D-ribosyl)anthranilate = 1-(2-carboxyphenylamino)-1-deoxy-D-ribulose 5-phosphate. It functions in the pathway amino-acid biosynthesis; L-tryptophan biosynthesis; L-tryptophan from chorismate: step 3/5. This chain is N-(5'-phosphoribosyl)anthranilate isomerase, found in Bradyrhizobium sp. (strain ORS 278).